The following is a 461-amino-acid chain: Cysteine--tRNA ligase (461 aa).

Cys29 is a binding site for Zn(2+). The short motif at 31–41 (MTVYDLCHLGH) is the 'HIGH' region element. 3 residues coordinate Zn(2+): Cys213, His238, and Glu242. Positions 270 to 274 (KMSKS) match the 'KMSKS' region motif. Lys273 contacts ATP.

It belongs to the class-I aminoacyl-tRNA synthetase family. In terms of assembly, monomer. The cofactor is Zn(2+).

The protein localises to the cytoplasm. The enzyme catalyses tRNA(Cys) + L-cysteine + ATP = L-cysteinyl-tRNA(Cys) + AMP + diphosphate. This chain is Cysteine--tRNA ligase, found in Delftia acidovorans (strain DSM 14801 / SPH-1).